The sequence spans 267 residues: Formamidopyrimidine-DNA glycosylase (267 aa).

The Schiff-base intermediate with DNA role is filled by proline 2. Glutamate 3 (proton donor) is an active-site residue. Catalysis depends on lysine 58, which acts as the Proton donor; for beta-elimination activity. 3 residues coordinate DNA: histidine 91, arginine 110, and arginine 152. The segment at 233–267 (DVYGRGHGTCTSCGGALEAVRLGNRSTVFCPRCQQ) adopts an FPG-type zinc-finger fold. The Proton donor; for delta-elimination activity role is filled by arginine 257.

This sequence belongs to the FPG family. As to quaternary structure, monomer. Requires Zn(2+) as cofactor.

It carries out the reaction Hydrolysis of DNA containing ring-opened 7-methylguanine residues, releasing 2,6-diamino-4-hydroxy-5-(N-methyl)formamidopyrimidine.. It catalyses the reaction 2'-deoxyribonucleotide-(2'-deoxyribose 5'-phosphate)-2'-deoxyribonucleotide-DNA = a 3'-end 2'-deoxyribonucleotide-(2,3-dehydro-2,3-deoxyribose 5'-phosphate)-DNA + a 5'-end 5'-phospho-2'-deoxyribonucleoside-DNA + H(+). Involved in base excision repair of DNA damaged by oxidation or by mutagenic agents. Acts as a DNA glycosylase that recognizes and removes damaged bases. Has a preference for oxidized purines, such as 7,8-dihydro-8-oxoguanine (8-oxoG). Has AP (apurinic/apyrimidinic) lyase activity and introduces nicks in the DNA strand. Cleaves the DNA backbone by beta-delta elimination to generate a single-strand break at the site of the removed base with both 3'- and 5'-phosphates. This chain is Formamidopyrimidine-DNA glycosylase, found in Pelobacter propionicus (strain DSM 2379 / NBRC 103807 / OttBd1).